The following is a 602-amino-acid chain: Elongation factor 4 (602 aa).

The tr-type G domain maps to 6 to 188 (KYIRNFCIIA…AIIRRVPPPR (183 aa)). GTP contacts are provided by residues 18 to 23 (DHGKST) and 135 to 138 (NKID).

This sequence belongs to the TRAFAC class translation factor GTPase superfamily. Classic translation factor GTPase family. LepA subfamily.

The protein localises to the cell membrane. It catalyses the reaction GTP + H2O = GDP + phosphate + H(+). Required for accurate and efficient protein synthesis under certain stress conditions. May act as a fidelity factor of the translation reaction, by catalyzing a one-codon backward translocation of tRNAs on improperly translocated ribosomes. Back-translocation proceeds from a post-translocation (POST) complex to a pre-translocation (PRE) complex, thus giving elongation factor G a second chance to translocate the tRNAs correctly. Binds to ribosomes in a GTP-dependent manner. The protein is Elongation factor 4 of Moorella thermoacetica (strain ATCC 39073 / JCM 9320).